The sequence spans 418 residues: MAAVIVLAAGGGTRMKSTKSKLLHEVAGRPMLSWAIGAARGLNPEHLVVVVGHRREQVEAHLAEDAPDVTTAVQAEQKGTGHAVACGLEGLDELHGEVVVTYGDVPMLTGETLQRMVEVHRERRNLVTVLTAEVEDPTGYGRILRGGEAVVGIVEHKDADEAQRAVREINSGIYVFDAEALREGVSKLSNDNVQGEYYLTDVVTMAADGTVEVPGRGRVGAFRIDDVWQTEGVNDRVQLARMNAEVNRRIVTGWMRAGVTIIDPTSTWIQPDVDLANDVTLYPGVFLNGATTIGAGATVGPDVTVTDSEIREEATVTRSEVTLAVVGEGVRVGPFSNIRPGSVLDRDAKVGAFVETKNTHIGTEAAIPHMAYVGDSEVTAGSSIVAGSVLSRECAAPATVSDITSDSQDDTLNPEADQ.

The tract at residues 1–236 (MAAVIVLAAG…VWQTEGVNDR (236 aa)) is pyrophosphorylase. Residues 7-10 (LAAG), Lys21, Gln74, 79-80 (GT), 102-104 (YGD), Gly141, Glu155, Asn170, and Asn234 contribute to the UDP-N-acetyl-alpha-D-glucosamine site. Mg(2+) is bound at residue Asp104. Residue Asn234 coordinates Mg(2+). A linker region spans residues 237-257 (VQLARMNAEVNRRIVTGWMRA). Residues 258–418 (GVTIIDPTST…DDTLNPEADQ (161 aa)) form an N-acetyltransferase region. UDP-N-acetyl-alpha-D-glucosamine contacts are provided by Arg339 and Lys357. The active-site Proton acceptor is His369. Tyr372 contacts UDP-N-acetyl-alpha-D-glucosamine. Residue Ala386 participates in acetyl-CoA binding.

The protein in the N-terminal section; belongs to the N-acetylglucosamine-1-phosphate uridyltransferase family. It in the C-terminal section; belongs to the transferase hexapeptide repeat family. Homotrimer. It depends on Mg(2+) as a cofactor.

The protein resides in the cytoplasm. The enzyme catalyses alpha-D-glucosamine 1-phosphate + acetyl-CoA = N-acetyl-alpha-D-glucosamine 1-phosphate + CoA + H(+). It catalyses the reaction N-acetyl-alpha-D-glucosamine 1-phosphate + UTP + H(+) = UDP-N-acetyl-alpha-D-glucosamine + diphosphate. Its pathway is nucleotide-sugar biosynthesis; UDP-N-acetyl-alpha-D-glucosamine biosynthesis; N-acetyl-alpha-D-glucosamine 1-phosphate from alpha-D-glucosamine 6-phosphate (route II): step 2/2. The protein operates within nucleotide-sugar biosynthesis; UDP-N-acetyl-alpha-D-glucosamine biosynthesis; UDP-N-acetyl-alpha-D-glucosamine from N-acetyl-alpha-D-glucosamine 1-phosphate: step 1/1. It participates in bacterial outer membrane biogenesis; LPS lipid A biosynthesis. Functionally, catalyzes the last two sequential reactions in the de novo biosynthetic pathway for UDP-N-acetylglucosamine (UDP-GlcNAc). The C-terminal domain catalyzes the transfer of acetyl group from acetyl coenzyme A to glucosamine-1-phosphate (GlcN-1-P) to produce N-acetylglucosamine-1-phosphate (GlcNAc-1-P), which is converted into UDP-GlcNAc by the transfer of uridine 5-monophosphate (from uridine 5-triphosphate), a reaction catalyzed by the N-terminal domain. This chain is Bifunctional protein GlmU, found in Cutibacterium acnes (strain DSM 16379 / KPA171202) (Propionibacterium acnes).